Here is a 297-residue protein sequence, read N- to C-terminus: GTPase Era (297 aa).

Residues 7–174 (HSGFVSIIGR…VQVVRDLLPE (168 aa)) enclose the Era-type G domain. Positions 15–22 (GRPNVGKS) are G1. A GTP-binding site is contributed by 15–22 (GRPNVGKS). The tract at residues 41–45 (QTTRN) is G2. A G3 region spans residues 62-65 (DTPG). GTP contacts are provided by residues 62 to 66 (DTPGI) and 124 to 127 (NKVD). A G4 region spans residues 124–127 (NKVD). Residues 153-155 (VSA) form a G5 region. Residues 205–282 (THDEVPYSVA…FLELFVRVSR (78 aa)) form the KH type-2 domain.

This sequence belongs to the TRAFAC class TrmE-Era-EngA-EngB-Septin-like GTPase superfamily. Era GTPase family. In terms of assembly, monomer.

It is found in the cytoplasm. The protein resides in the cell inner membrane. Functionally, an essential GTPase that binds both GDP and GTP, with rapid nucleotide exchange. Plays a role in 16S rRNA processing and 30S ribosomal subunit biogenesis and possibly also in cell cycle regulation and energy metabolism. This Geotalea daltonii (strain DSM 22248 / JCM 15807 / FRC-32) (Geobacter daltonii) protein is GTPase Era.